A 502-amino-acid chain; its full sequence is Glycerol kinase (502 aa).

Threonine 14 is an ADP binding site. The ATP site is built by threonine 14, threonine 15, and serine 16. Position 14 (threonine 14) interacts with sn-glycerol 3-phosphate. Arginine 18 contacts ADP. Sn-glycerol 3-phosphate contacts are provided by arginine 84, glutamate 85, and tyrosine 136. 3 residues coordinate glycerol: arginine 84, glutamate 85, and tyrosine 136. Position 232 is a phosphohistidine; by HPr (histidine 232). Aspartate 246 lines the sn-glycerol 3-phosphate pocket. 2 residues coordinate glycerol: aspartate 246 and glutamine 247. Positions 268 and 311 each coordinate ADP. Positions 268, 311, 315, and 412 each coordinate ATP. ADP contacts are provided by glycine 412 and asparagine 416.

Belongs to the FGGY kinase family. As to quaternary structure, homotetramer and homodimer (in equilibrium). Post-translationally, the phosphoenolpyruvate-dependent sugar phosphotransferase system (PTS), including enzyme I, and histidine-containing protein (HPr) are required for the phosphorylation, which leads to the activation of the enzyme.

The enzyme catalyses glycerol + ATP = sn-glycerol 3-phosphate + ADP + H(+). Its pathway is polyol metabolism; glycerol degradation via glycerol kinase pathway; sn-glycerol 3-phosphate from glycerol: step 1/1. Its activity is regulated as follows. Activated by phosphorylation and inhibited by fructose 1,6-bisphosphate (FBP). Functionally, key enzyme in the regulation of glycerol uptake and metabolism. Catalyzes the phosphorylation of glycerol to yield sn-glycerol 3-phosphate. This chain is Glycerol kinase, found in Streptococcus pneumoniae (strain 70585).